The following is a 1966-amino-acid chain: Alpha-protein kinase 2 (1966 aa).

Disordered regions lie at residues 23 to 65 (NSSP…STGL), 211 to 231 (AMNS…DTDK), 1211 to 1259 (LKSN…AYSD), 1303 to 1365 (SLPN…EGAG), 1386 to 1423 (KTQG…VNGK), and 1437 to 1463 (NKPV…SVRP). The segment covering 211–227 (AMNSEQSPDQPFSIASN) has biased composition (polar residues). The span at 1211-1221 (LKSNKKSSSSD) shows a compositional bias: low complexity. Residues 1325–1342 (SDGKMRSKHKEKPDDKQQ) are compositionally biased toward basic and acidic residues. A compositionally biased stretch (basic residues) spans 1388-1397 (QGKKKKKHVQ). Residues 1401–1417 (PKPENDAPTDVRSESRQ) show a composition bias toward basic and acidic residues. In terms of domain architecture, Ig-like spans 1577-1659 (PRVVSEIQAD…SLIVANISVS (83 aa)). C1599 and C1649 form a disulfide bridge. Residues 1702–1934 (KEDFLSDQYF…YCELLGLVSL (233 aa)) enclose the Alpha-type protein kinase domain. The interval 1937 to 1966 (KPKRTVAPPKPKTQPVPKKKTFGPVLNAKS) is disordered.

Belongs to the protein kinase superfamily. Alpha-type protein kinase family. ALPK subfamily. Expressed in developing cardiac tissue.

It localises to the basolateral cell membrane. The enzyme catalyses L-seryl-[protein] + ATP = O-phospho-L-seryl-[protein] + ADP + H(+). It catalyses the reaction L-threonyl-[protein] + ATP = O-phospho-L-threonyl-[protein] + ADP + H(+). In terms of biological role, protein kinase that recognizes phosphorylation sites in which the surrounding peptides have an alpha-helical conformation. Regulates cardiac development and cardiomyocyte differentiation by negatively regulating Wnt/beta-catenin signaling. This Danio rerio (Zebrafish) protein is Alpha-protein kinase 2 (alpk2).